A 59-amino-acid chain; its full sequence is Large ribosomal subunit protein bL32 (59 aa).

2 disordered regions span residues 1–23 (MAVQQNKKSPSKRGMHRSHDFLT) and 35–59 (EVHLRHHVSPNGYYRGKKVVKTKND). The segment covering 49–59 (RGKKVVKTKND) has biased composition (basic residues).

Belongs to the bacterial ribosomal protein bL32 family.

The chain is Large ribosomal subunit protein bL32 from Burkholderia ambifaria (strain MC40-6).